We begin with the raw amino-acid sequence, 37 residues long: Large ribosomal subunit protein bL36c (37 aa).

Belongs to the bacterial ribosomal protein bL36 family.

It localises to the plastid. The protein resides in the chloroplast. In Pinus koraiensis (Korean pine), this protein is Large ribosomal subunit protein bL36c.